Consider the following 795-residue polypeptide: METALAKTPQKRQVMFLAILLLLWEAGSEAVRYSIPEETESGYSVANLAKDLGLGVGELATRGARMHYKGNKELLQLDIKTGNLLLYEKLDREVICGATEPCILHFQLLLENPVQFFQTDLQLTDINDHSPEFPEKEMLLKIPESTQPGTVFPLKVAQDFDIGSNAVQNYTISPNSHFHVATHNRGDGRKYPELVLDKALDREERPELSLTLTALDGGAPPRSGTTTIRIVVLDNNDNAPEFLQSLYEVQVPENSPLNSLVVVVSARDLDAGAYGSVAYALFQGDEVTQPFVIDEKTGEIRLKRALDFEATPYYNVEIVATDGGGLSGKCTVAMEVVDVNDNAPELTMSTLSSPIPENAPETVVAVFSVSDPDSGDNGRMICSIQNDLPFLLKPTLKNFYTLVTQRTLDRESQAEYNITITVTDMGTPRLKTEHNITVLVSDVNDNAPAFTQTSYTLFVRENNSPALQIGSVSATDRDSGTNAQVTYSLLPPQNPHLRLASLVSINADNGHLFALRSLDYEALQAFEFRVGATDRGSPALSSEALVRVLVLDANDNSPFVLYPLQNGSAPCTELVPRAAEPGYLVTKVVAVDGDSGQNAWLSYQLLKATEPGLFSMWAHNGEVRTARLLSERDAAKHRLVVLVKDNGEPPRSATATLHVLLVDGFSQPYLPLPEAAPAQAQADSLTVYLVVALASVSSLFLFSVLLFVAVRLCRRSRAAPVGRCSVPEGPFPGHLVDVSGTGILSQSYQYEVCLTGDSGAGEFKFLKPIIPNLLPQGASEEIGKTAAFRNSFGLN.

The first 30 residues, 1 to 30 (METALAKTPQKRQVMFLAILLLLWEAGSEA), serve as a signal peptide directing secretion. The Extracellular portion of the chain corresponds to 31-689 (VRYSIPEETE…AQADSLTVYL (659 aa)). 5 Cadherin domains span residues 35–133 (IPEE…SPEF), 138–242 (MLLK…APEF), 247–346 (YEVQ…APEL), 351–450 (LSSP…APAF), and 455–560 (YTLF…SPFV). N-linked (GlcNAc...) asparagine glycosylation is present at Asn-169. Lys-296 bears the N6-acetyllysine mark. 2 N-linked (GlcNAc...) asparagine glycosylation sites follow: Asn-417 and Asn-435. N-linked (GlcNAc...) asparagine glycosylation occurs at Asn-566. Residues 567 to 670 (GSAPCTELVP…LVDGFSQPYL (104 aa)) enclose the Cadherin 6 domain. The chain crosses the membrane as a helical span at residues 690-710 (VVALASVSSLFLFSVLLFVAV). Residues 711–795 (RLCRRSRAAP…AAFRNSFGLN (85 aa)) lie on the Cytoplasmic side of the membrane.

It is found in the cell membrane. Its function is as follows. Potential calcium-dependent cell-adhesion protein. May be involved in the establishment and maintenance of specific neuronal connections in the brain. The polypeptide is Protocadherin beta-5 (PCDHB5) (Pan troglodytes (Chimpanzee)).